The chain runs to 140 residues: Nucleoside diphosphate kinase (140 aa).

Positions 11, 59, 87, 93, 104, and 114 each coordinate ATP. Histidine 117 (pros-phosphohistidine intermediate) is an active-site residue.

The protein belongs to the NDK family. In terms of assembly, homotetramer. The cofactor is Mg(2+).

It localises to the cytoplasm. The catalysed reaction is a 2'-deoxyribonucleoside 5'-diphosphate + ATP = a 2'-deoxyribonucleoside 5'-triphosphate + ADP. It carries out the reaction a ribonucleoside 5'-diphosphate + ATP = a ribonucleoside 5'-triphosphate + ADP. In terms of biological role, major role in the synthesis of nucleoside triphosphates other than ATP. The ATP gamma phosphate is transferred to the NDP beta phosphate via a ping-pong mechanism, using a phosphorylated active-site intermediate. This chain is Nucleoside diphosphate kinase, found in Chelativorans sp. (strain BNC1).